A 750-amino-acid polypeptide reads, in one-letter code: Photosystem I P700 chlorophyll a apoprotein A1 (750 aa).

8 consecutive transmembrane segments (helical) span residues V70–A93, L156–H179, L195–L219, I291–Y309, W346–Y369, L385–V411, A433–H455, and F531–L549. [4Fe-4S] cluster contacts are provided by C573 and C582. The next 2 helical transmembrane spans lie at H589 to W610 and L664 to F686. Position 675 (H675) interacts with chlorophyll a'. Chlorophyll a-binding residues include M683 and Y691. W692 lines the phylloquinone pocket. Residues A724–A744 form a helical membrane-spanning segment.

Belongs to the PsaA/PsaB family. The PsaA/B heterodimer binds the P700 chlorophyll special pair and subsequent electron acceptors. PSI consists of a core antenna complex that captures photons, and an electron transfer chain that converts photonic excitation into a charge separation. The eukaryotic PSI reaction center is composed of at least 11 subunits. The cofactor is P700 is a chlorophyll a/chlorophyll a' dimer, A0 is one or more chlorophyll a, A1 is one or both phylloquinones and FX is a shared 4Fe-4S iron-sulfur center..

It localises to the plastid. It is found in the chloroplast thylakoid membrane. It carries out the reaction reduced [plastocyanin] + hnu + oxidized [2Fe-2S]-[ferredoxin] = oxidized [plastocyanin] + reduced [2Fe-2S]-[ferredoxin]. In terms of biological role, psaA and PsaB bind P700, the primary electron donor of photosystem I (PSI), as well as the electron acceptors A0, A1 and FX. PSI is a plastocyanin-ferredoxin oxidoreductase, converting photonic excitation into a charge separation, which transfers an electron from the donor P700 chlorophyll pair to the spectroscopically characterized acceptors A0, A1, FX, FA and FB in turn. Oxidized P700 is reduced on the lumenal side of the thylakoid membrane by plastocyanin. This Nicotiana sylvestris (Wood tobacco) protein is Photosystem I P700 chlorophyll a apoprotein A1.